Consider the following 218-residue polypeptide: Thiopurine S-methyltransferase (218 aa).

Residues Trp10, Leu45, Glu66, and Arg123 each contribute to the S-adenosyl-L-methionine site.

This sequence belongs to the class I-like SAM-binding methyltransferase superfamily. TPMT family.

The protein resides in the cytoplasm. It carries out the reaction S-adenosyl-L-methionine + a thiopurine = S-adenosyl-L-homocysteine + a thiopurine S-methylether.. The chain is Thiopurine S-methyltransferase from Azotobacter vinelandii (strain DJ / ATCC BAA-1303).